Consider the following 366-residue polypeptide: Protein-glutamate methylesterase/protein-glutamine glutaminase of group 2 operon (366 aa).

The region spanning 19-136 (RVLIVDDSAM…GQGLPAIMRD (118 aa)) is the Response regulatory domain. D70 is subject to 4-aspartylphosphate. The region spanning 162–356 (PGASEDWIHA…ARMMLAAAAD (195 aa)) is the CheB-type methylesterase domain. Active-site residues include S175, H201, and D298.

Belongs to the CheB family. Phosphorylated by CheA. Phosphorylation of the N-terminal regulatory domain activates the methylesterase activity.

It is found in the cytoplasm. It carries out the reaction [protein]-L-glutamate 5-O-methyl ester + H2O = L-glutamyl-[protein] + methanol + H(+). The enzyme catalyses L-glutaminyl-[protein] + H2O = L-glutamyl-[protein] + NH4(+). In terms of biological role, involved in chemotaxis. Part of a chemotaxis signal transduction system that modulates chemotaxis in response to various stimuli. Catalyzes the demethylation of specific methylglutamate residues introduced into the chemoreceptors (methyl-accepting chemotaxis proteins or MCP) by CheR. Also mediates the irreversible deamidation of specific glutamine residues to glutamic acid. This chain is Protein-glutamate methylesterase/protein-glutamine glutaminase of group 2 operon, found in Cereibacter sphaeroides (Rhodobacter sphaeroides).